Consider the following 193-residue polypeptide: Tetrahydromethanopterin S-methyltransferase subunit A 2 (193 aa).

The Cytoplasmic portion of the chain corresponds to 1–38; sequence MADKKPTAENWPVVSGDYIVGDPESPVAVTTLASHNED. Residues 39–58 traverse the membrane as a helical segment; sequence IPAAAGAAIAGPCKTENLGI. The Extracellular segment spans residues 59 to 193; the sequence is EKVVANIISN…SESEKIESEA (135 aa). His-84 provides a ligand contact to 5-hydroxybenzimidazolylcob(I)amide. The disordered stretch occupies residues 174–193; the sequence is SKKSSFVESSSESEKIESEA.

The protein belongs to the MtrA family. As to quaternary structure, the complex is composed of 8 subunits; MtrA, MtrB, MtrC, MtrD, MtrE, MtrF, MtrG and MtrH. 5-hydroxybenzimidazolylcob(I)amide serves as cofactor.

It localises to the cell membrane. The enzyme catalyses 5-methyl-5,6,7,8-tetrahydromethanopterin + coenzyme M + 2 Na(+)(in) = 5,6,7,8-tetrahydromethanopterin + methyl-coenzyme M + 2 Na(+)(out). The protein operates within one-carbon metabolism; methanogenesis from CO(2); methyl-coenzyme M from 5,10-methylene-5,6,7,8-tetrahydromethanopterin: step 2/2. In terms of biological role, part of a complex that catalyzes the formation of methyl-coenzyme M and tetrahydromethanopterin from coenzyme M and methyl-tetrahydromethanopterin. This is an energy-conserving, sodium-ion translocating step. The sequence is that of Tetrahydromethanopterin S-methyltransferase subunit A 2 from Methanobrevibacter ruminantium (strain ATCC 35063 / DSM 1093 / JCM 13430 / OCM 146 / M1) (Methanobacterium ruminantium).